We begin with the raw amino-acid sequence, 580 residues long: Threonine--tRNA ligase (580 aa).

The catalytic stretch occupies residues D179–P476. Zn(2+) is bound by residues C272, H323, and H453.

Belongs to the class-II aminoacyl-tRNA synthetase family. Homodimer. Requires Zn(2+) as cofactor.

The protein localises to the cytoplasm. The enzyme catalyses tRNA(Thr) + L-threonine + ATP = L-threonyl-tRNA(Thr) + AMP + diphosphate + H(+). Its function is as follows. Catalyzes the attachment of threonine to tRNA(Thr) in a two-step reaction: L-threonine is first activated by ATP to form Thr-AMP and then transferred to the acceptor end of tRNA(Thr). Also edits incorrectly charged L-seryl-tRNA(Thr). The polypeptide is Threonine--tRNA ligase (Ureaplasma parvum serovar 3 (strain ATCC 27815 / 27 / NCTC 11736)).